A 207-amino-acid chain; its full sequence is Venom allergen 5 (207 aa).

3 cysteine pairs are disulfide-bonded: cysteine 4-cysteine 16, cysteine 8-cysteine 105, and cysteine 29-cysteine 97. One can recognise an SCP domain in the interval 49–192 (DEHNRFRQKV…MKSHYLVCNY (144 aa)). The residue at position 111 (tyrosine 111) is a Phosphotyrosine. The N-linked (Glc) (glycation) lysine glycan is linked to lysine 141. A disulfide bond links cysteine 173 and cysteine 190.

The protein belongs to the CRISP family. Venom allergen 5-like subfamily. In terms of processing, glycosylated. As to expression, expressed by the venom gland.

It is found in the secreted. The polypeptide is Venom allergen 5 (Polybia paulista (Neotropical social wasp)).